Consider the following 397-residue polypeptide: Homoserine O-acetyltransferase (397 aa).

The AB hydrolase-1 domain maps to 58–368; it reads NAVLVLHALT…EAKWGHDAFL (311 aa). Catalysis depends on serine 164, which acts as the Nucleophile. Arginine 233 serves as a coordination point for substrate. Catalysis depends on residues aspartate 331 and histidine 364. Residue aspartate 365 coordinates substrate.

This sequence belongs to the AB hydrolase superfamily. MetX family. In terms of assembly, homodimer.

The protein resides in the cytoplasm. The catalysed reaction is L-homoserine + acetyl-CoA = O-acetyl-L-homoserine + CoA. It participates in amino-acid biosynthesis; L-methionine biosynthesis via de novo pathway; O-acetyl-L-homoserine from L-homoserine: step 1/1. Functionally, transfers an acetyl group from acetyl-CoA to L-homoserine, forming acetyl-L-homoserine. In Solidesulfovibrio magneticus (strain ATCC 700980 / DSM 13731 / RS-1) (Desulfovibrio magneticus), this protein is Homoserine O-acetyltransferase.